An 866-amino-acid polypeptide reads, in one-letter code: Rifampicin phosphotransferase (866 aa).

The ATP-binding stretch occupies residues 1 to 313 (MSSLVLGLHE…FYIVQSRPIT (313 aa)). ATP is bound by residues lysine 22, arginine 116, glycine 131, threonine 135, glutamine 182, glutamate 296, glutamine 308, and arginine 310. The segment at 326–754 (NHVYISVGHQ…TSDGEIVTGE (429 aa)) is rifampicin-binding. The interval 410 to 429 (IPNDKTAPNPSRGNADMPAQ) is disordered. Positions 767-865 (GLPVSSGVIE…VHGTEGYIEI (99 aa)) are swivel phosphohistidine. The Tele-phosphohistidine intermediate role is filled by histidine 825.

It belongs to the rifampicin phosphotransferase family.

The enzyme catalyses rifampicin + ATP + H2O = 21-phosphorifampicin + AMP + phosphate + 2 H(+). Its function is as follows. Catalyzes the phosphorylation of rifampicin, also known as rifampin (RIF), leading to its inactivation. This is Rifampicin phosphotransferase from Bacillus subtilis (strain 168).